Here is a 194-residue protein sequence, read N- to C-terminus: Phosphoheptose isomerase (194 aa).

Positions 37 to 194 constitute an SIS domain; that stretch reads ISNSFKQGGK…LIEFEMAKQA (158 aa). 52–54 contacts substrate; it reads NGG. Positions 61 and 65 each coordinate Zn(2+). Substrate-binding positions include Glu65, 93-94, 119-121, Ser124, and Gln172; these read ND and STS. Residues Gln172 and His180 each coordinate Zn(2+).

This sequence belongs to the SIS family. GmhA subfamily. As to quaternary structure, homotetramer. The cofactor is Zn(2+).

Its subcellular location is the cytoplasm. It carries out the reaction 2 D-sedoheptulose 7-phosphate = D-glycero-alpha-D-manno-heptose 7-phosphate + D-glycero-beta-D-manno-heptose 7-phosphate. The protein operates within carbohydrate biosynthesis; D-glycero-D-manno-heptose 7-phosphate biosynthesis; D-glycero-alpha-D-manno-heptose 7-phosphate and D-glycero-beta-D-manno-heptose 7-phosphate from sedoheptulose 7-phosphate: step 1/1. Its pathway is bacterial outer membrane biogenesis; LOS core biosynthesis. Catalyzes the isomerization of sedoheptulose 7-phosphate in D-glycero-D-manno-heptose 7-phosphate. The sequence is that of Phosphoheptose isomerase from Haemophilus influenzae (strain ATCC 51907 / DSM 11121 / KW20 / Rd).